Here is a 2090-residue protein sequence, read N- to C-terminus: Nuclear pore complex protein Nup205 (2090 aa).

The protein belongs to the NUP186/NUP192/NUP205 family. In terms of assembly, part of the nuclear pore complex (NPC).

It is found in the nucleus. Its subcellular location is the nuclear pore complex. Its function is as follows. Plays a role in the nuclear pore complex (NPC) assembly and maintenance, but with limited role in NPC permeability. Required for specific nuclear import pathways such as Mad import. The sequence is that of Nuclear pore complex protein Nup205 from Drosophila melanogaster (Fruit fly).